The following is a 450-amino-acid chain: MAGDHAGDQSFYDFLIEEPEMIAPTPPGQFPHQQPISSPNRTSRNTPLRPESTEIETHHHANHPPALPVLGMQLPVPGTVPESSRAQSRASLNLDIDLDLHAPSHPSHLSHGAPHEQEHAHEIQRHRAHSAQSSAGLPPTGFASHLPPASSGPVSLGWNMYHVPPNLHLNANQFNFEVPGHMNVSGHPTHLEHSSTNPNSFHYEHNIVSPSSIHPSTAHFDGEVPSQWDDSLGHGASTPKVRTPSHHVSSNPWAEINEPTGGDNDNLAPVTRPRKPARARRQKKEPRKLSDASQGARSSSTGGTAHSVSDAASPSSTSHQSRASLTSKSASMTSAASTASSRKSKLRSASRTSKNTLDKPNDTAEDRRTRASHNLVEKQYRNRLNAQFESLLHALPEQIRHGDNGGGNGNVDNESEQANDLDRRVSKGEVLEMARRHIEALERERNQLGT.

Disordered regions lie at residues 18 to 87, 99 to 148, 185 to 377, and 398 to 426; these read EPEM…SRAQ, DLHA…HLPP, SGHP…NLVE, and QIRH…RRVS. Over residues 31–46 the composition is skewed to polar residues; it reads PHQQPISSPNRTSRNT. A compositionally biased stretch (low complexity) spans 101–112; that stretch reads HAPSHPSHLSHG. A compositionally biased stretch (basic and acidic residues) spans 113 to 125; sequence APHEQEHAHEIQR. Residues 272–286 are compositionally biased toward basic residues; the sequence is RPRKPARARRQKKEP. Over residues 291–304 the composition is skewed to polar residues; the sequence is DASQGARSSSTGGT. A compositionally biased stretch (low complexity) spans 305 to 341; the sequence is AHSVSDAASPSSTSHQSRASLTSKSASMTSAASTASS. Over residues 356–377 the composition is skewed to basic and acidic residues; that stretch reads TLDKPNDTAEDRRTRASHNLVE. Residues 368–441 form the bHLH domain; it reads RTRASHNLVE…EMARRHIEAL (74 aa).

This Fusarium culmorum protein is Allergen Fus c 3.